Here is a 301-residue protein sequence, read N- to C-terminus: Developmental pluripotency-associated protein 2 (301 aa).

The segment at 31–85 (KEEEEPNTDYATQSNVSSSTLDHTPPARSLVRHAGIKHPTRTIPSTCPPPSLPPI) is disordered. Residues 39–52 (DYATQSNVSSSTLD) show a composition bias toward polar residues. The segment covering 60 to 70 (LVRHAGIKHPT) has biased composition (basic residues). The SAP domain maps to 85-119 (IRDVSRNTLREWCRYHNLSTDGKKVEVYLRLRRHS).

As to quaternary structure, interacts with DPPA4. As to expression, not detected in adult tissues.

The protein localises to the nucleus. Its function is as follows. Binds to target gene promoters, including NKX2-5 and SYCE1, but not GATA4, and may be involved in the maintenance of the active epigenetic status of these genes. The polypeptide is Developmental pluripotency-associated protein 2 (Dppa2) (Mus musculus (Mouse)).